The chain runs to 213 residues: High frequency lysogenization protein HflD homolog (213 aa).

The stretch at 79–122 (QGLNAELTRYTLSLMVLERKLSSAKGALNTLGDRINGLQRQLDH) forms a coiled coil.

The protein belongs to the HflD family.

The protein resides in the cytoplasm. It localises to the cell inner membrane. The protein is High frequency lysogenization protein HflD homolog of Salmonella dublin (strain CT_02021853).